The chain runs to 80 residues: Small ribosomal subunit protein bS18 (80 aa).

Belongs to the bacterial ribosomal protein bS18 family. Part of the 30S ribosomal subunit. Forms a tight heterodimer with protein bS6.

Binds as a heterodimer with protein bS6 to the central domain of the 16S rRNA, where it helps stabilize the platform of the 30S subunit. The chain is Small ribosomal subunit protein bS18 from Staphylococcus epidermidis (strain ATCC 35984 / DSM 28319 / BCRC 17069 / CCUG 31568 / BM 3577 / RP62A).